Reading from the N-terminus, the 281-residue chain is Probable replication-associated protein repA1 (281 aa).

The protein belongs to the IncFII RepA family.

This protein is essential for plasmid replication; it is involved in copy control functions. In Buchnera aphidicola subsp. Cinara cedri (strain Cc), this protein is Probable replication-associated protein repA1 (repA1).